The primary structure comprises 388 residues: MNCLFLFMSKKPKSRGNMEKEKKNIRGREFLQKSAPELTTRKTTLSFNLPTPRSLPSPTSIKDLYTDREQNQNQNLRVFSFKELSDATCEFSRKLKIGEGGFGSVYKATINNPTVGDSHSSPLTVAVKKLNRQSLQGHKQWLAEVHFLGVVNHPNVVRLLGYCSEDRERLLVYELMSNRSLEDHLFTLRTLTLSWKQRLEIMLGAAQGLAYLHEIQVIYRDFKSSNVLLNEEFHPKLSDFGLAREGPEGDNTHVTTARVGTDGYAAPEYVITGHLKTHCDVYSFGVVLYEIITGRRTLERMKPLAEQKLLEWVKKYPINSKRFKMIVDSKLCNKYPIAMVRRVAKLADHCVNKIDKERPTMAFVVESLTNIIEESNSEDMGSSVGIRG.

The S-palmitoyl cysteine moiety is linked to residue cysteine 3. The Protein kinase domain maps to 91–372 (FSRKLKIGEG…FVVESLTNII (282 aa)). Residues 97-105 (IGEGGFGSV) and lysine 128 contribute to the ATP site. Catalysis depends on aspartate 221, which acts as the Proton acceptor.

The protein belongs to the protein kinase superfamily. Ser/Thr protein kinase family.

It is found in the cell membrane. It catalyses the reaction L-seryl-[protein] + ATP = O-phospho-L-seryl-[protein] + ADP + H(+). The enzyme catalyses L-threonyl-[protein] + ATP = O-phospho-L-threonyl-[protein] + ADP + H(+). Functionally, may be involved in plant defense signaling. The protein is Probable serine/threonine-protein kinase PBL20 of Arabidopsis thaliana (Mouse-ear cress).